The chain runs to 125 residues: MSDLLKEFNEQQMKLLSNKEIPKFSSGDTLRVSMKIFDGVSERLQVFEGVCIKRKNNGLHSSFTLRKISYNESIQLQVFLYSPIVESIEVIKFGRVRRAKLYYMLSLFGKSARIKERSDRTKKLS.

This sequence belongs to the bacterial ribosomal protein bL19 family.

In terms of biological role, this protein is located at the 30S-50S ribosomal subunit interface and may play a role in the structure and function of the aminoacyl-tRNA binding site. In Ehrlichia chaffeensis (strain ATCC CRL-10679 / Arkansas), this protein is Large ribosomal subunit protein bL19.